Consider the following 362-residue polypeptide: 2-aminoethylphosphonate--pyruvate transaminase (362 aa).

Residue Lys-193 is modified to N6-(pyridoxal phosphate)lysine.

Belongs to the class-V pyridoxal-phosphate-dependent aminotransferase family. PhnW subfamily. As to quaternary structure, homodimer. Pyridoxal 5'-phosphate is required as a cofactor.

The enzyme catalyses (2-aminoethyl)phosphonate + pyruvate = phosphonoacetaldehyde + L-alanine. Involved in phosphonate degradation. The sequence is that of 2-aminoethylphosphonate--pyruvate transaminase from Bacteroides fragilis (strain ATCC 25285 / DSM 2151 / CCUG 4856 / JCM 11019 / LMG 10263 / NCTC 9343 / Onslow / VPI 2553 / EN-2).